The chain runs to 235 residues: Clathrin light chain A (235 aa).

The tract at residues 1-32 is disordered; sequence MAELDPFGAPAGAPGGPALGNGVAGAGEEDPA. Positions 13-25 are enriched in gly residues; it reads APGGPALGNGVAG. Positions 99–161 are involved in binding clathrin heavy chain; sequence VDRLQSEPES…QLQKTKANNR (63 aa). S104 and S193 each carry phosphoserine. Position 210 is an N6-acetyllysine (K210). A Phosphoserine modification is found at S223. Position 229 is an N6-acetyllysine (K229).

The protein belongs to the clathrin light chain family. As to quaternary structure, clathrin coats are formed from molecules containing 3 heavy chains and 3 light chains. Interacts with CALY; the interaction stimulates clathrin self-assembly and clathrin-mediated endocytosis. Interacts with CKAP5 and TACC3 forming the TACC3/ch-TOG/clathrin complex located at spindle inter-microtubules bridges; the complex implicates clathrin triskelions.

The protein resides in the cytoplasmic vesicle membrane. It is found in the membrane. The protein localises to the coated pit. Its subcellular location is the cytoplasm. It localises to the cytoskeleton. The protein resides in the spindle. Functionally, clathrin is the major protein of the polyhedral coat of coated pits and vesicles. Acts as a component of the TACC3/ch-TOG/clathrin complex proposed to contribute to stabilization of kinetochore fibers of the mitotic spindle by acting as inter-microtubule bridge. In Mus musculus (Mouse), this protein is Clathrin light chain A (Clta).